Here is a 343-residue protein sequence, read N- to C-terminus: Glyceraldehyde-3-phosphate dehydrogenase (343 aa).

Residues 13–14 (TI) and Gly111 each bind NAD(+). Residue 140–142 (SCN) coordinates D-glyceraldehyde 3-phosphate. The active-site Nucleophile is Cys141. Arg169 contributes to the NAD(+) binding site. 195–196 (HA) is a D-glyceraldehyde 3-phosphate binding site. Gln303 contacts NAD(+).

Belongs to the glyceraldehyde-3-phosphate dehydrogenase family. Homotetramer.

The protein localises to the cytoplasm. The enzyme catalyses D-glyceraldehyde 3-phosphate + phosphate + NADP(+) = (2R)-3-phospho-glyceroyl phosphate + NADPH + H(+). It carries out the reaction D-glyceraldehyde 3-phosphate + phosphate + NAD(+) = (2R)-3-phospho-glyceroyl phosphate + NADH + H(+). Its pathway is carbohydrate degradation; glycolysis; pyruvate from D-glyceraldehyde 3-phosphate: step 1/5. The sequence is that of Glyceraldehyde-3-phosphate dehydrogenase from Sulfolobus acidocaldarius (strain ATCC 33909 / DSM 639 / JCM 8929 / NBRC 15157 / NCIMB 11770).